Consider the following 883-residue polypeptide: Histidine--tRNA ligase, cytoplasmic (883 aa).

This sequence belongs to the class-II aminoacyl-tRNA synthetase family.

The protein resides in the cytoplasm. It localises to the cytosol. The enzyme catalyses tRNA(His) + L-histidine + ATP = L-histidyl-tRNA(His) + AMP + diphosphate + H(+). The chain is Histidine--tRNA ligase, cytoplasmic from Arabidopsis thaliana (Mouse-ear cress).